Reading from the N-terminus, the 196-residue chain is Inosine triphosphate pyrophosphatase 1 (196 aa).

Position 20-25 (20-25) interacts with ITP; it reads TGNDGK. Glu48 lines the Mg(2+) pocket. Residues Lys61, 77-78, Lys94, 153-156, Lys177, and 182-183 each bind ITP; these read DT, FGWD, and PR.

Belongs to the HAM1 NTPase family. Homodimer. The cofactor is Mg(2+). Requires Mn(2+) as cofactor.

The protein resides in the cytoplasm. It carries out the reaction ITP + H2O = IMP + diphosphate + H(+). The enzyme catalyses dITP + H2O = dIMP + diphosphate + H(+). The catalysed reaction is XTP + H2O = XMP + diphosphate + H(+). Pyrophosphatase that hydrolyzes non-canonical purine nucleotides such as inosine triphosphate (ITP), deoxyinosine triphosphate (dITP) or xanthosine 5'-triphosphate (XTP) to their respective monophosphate derivatives. The enzyme does not distinguish between the deoxy- and ribose forms. Probably excludes non-canonical purines from RNA and DNA precursor pools, thus preventing their incorporation into RNA and DNA and avoiding chromosomal lesions. This chain is Inosine triphosphate pyrophosphatase 1, found in Trypanosoma cruzi (strain CL Brener).